We begin with the raw amino-acid sequence, 307 residues long: GTPase Era (307 aa).

One can recognise an Era-type G domain in the interval 17–186; that stretch reads RCGFVAIVGR…LELLKPYLPE (170 aa). Residues 25 to 32 form a G1 region; that stretch reads GRPNVGKS. 25–32 lines the GTP pocket; the sequence is GRPNVGKS. The interval 51–55 is G2; the sequence is QTTRN. The G3 stretch occupies residues 72-75; sequence DTPG. Residues 72 to 76 and 133 to 136 each bind GTP; these read DTPGF and NKID. The segment at 133 to 136 is G4; that stretch reads NKID. The interval 165-167 is G5; it reads VSA. One can recognise a KH type-2 domain in the interval 217–293; the sequence is LGEELPYAMN…FLKVWVKVKS (77 aa).

This sequence belongs to the TRAFAC class TrmE-Era-EngA-EngB-Septin-like GTPase superfamily. Era GTPase family. Monomer.

It localises to the cytoplasm. The protein resides in the cell inner membrane. An essential GTPase that binds both GDP and GTP, with rapid nucleotide exchange. Plays a role in 16S rRNA processing and 30S ribosomal subunit biogenesis and possibly also in cell cycle regulation and energy metabolism. This chain is GTPase Era, found in Neisseria meningitidis serogroup C / serotype 2a (strain ATCC 700532 / DSM 15464 / FAM18).